Consider the following 374-residue polypeptide: Translocating chain-associated membrane protein 1 (374 aa).

The Cytoplasmic portion of the chain corresponds to M1 to M32. Residues L33–L53 traverse the membrane as a helical segment. The Lumenal segment spans residues Q54–A81. A glycan (N-linked (GlcNAc...) asparagine) is linked at N56. Residues T82 to L102 traverse the membrane as a helical segment. At D103–E121 the chain is on the cytoplasmic side. Positions S117 to H326 constitute a TLC domain. A helical membrane pass occupies residues S122–S142. Residues E143–N159 lie on the Lumenal side of the membrane. The chain crosses the membrane as a helical span at residues L160–F180. At P181–D192 the chain is on the cytoplasmic side. The chain crosses the membrane as a helical span at residues I193–L213. Residue N214 is a topological domain, lumenal. Residues L215–I235 form a helical membrane-spanning segment. Residues S236–S251 are Cytoplasmic-facing. Residues L252–V272 traverse the membrane as a helical segment. Residues G273 to R297 are Lumenal-facing. Residues I298–F318 form a helical membrane-spanning segment. The Cytoplasmic portion of the chain corresponds to Q319–S374. Residues P333–S374 form a disordered region. Residues V334–R347 show a composition bias toward basic residues. Residues N352–A363 are compositionally biased toward polar residues. A Phosphoserine modification is found at S365.

Belongs to the TRAM family. Interacts with SEC61B. May interact with Derlin-1/DERL1. N-glycosylated.

It localises to the endoplasmic reticulum membrane. Its function is as follows. Involved in the translocation of nascent protein chains into or through the endoplasmic reticulum (ER) membrane by facilitating the proper chain positioning at the SEC61 channel. Regulates the exposure of nascent secretory protein chain to the cytosol during translocation into the ER. May affect the phospholipid bilayer in the vicinity of the lateral gate of the SEC61 channel, thereby facilitating ER protein transport. Intimately associates with transmembrane (TM) domain of nascent membrane proteins during the entire integration process into the ER membrane. Associates with the second TM domain of G-protein-coupled receptor opsin/OPSD nascent chain in the ER membrane, which may facilitate its integration into the membrane. Under conditions of ER stress, participates in the disposal of misfolded ER membrane proteins during the unfolded protein response (UPR), an integrated stress response (ISR) pathway, by selectively retrotranslocating misfolded ER-membrane proteins from the ER into the cytosol where they are ubiquitinated and degraded by the proteasome. In Rattus norvegicus (Rat), this protein is Translocating chain-associated membrane protein 1.